The following is a 257-amino-acid chain: Auxin-responsive protein IAA17 (257 aa).

Disordered stretches follow at residues M1–T51 and G85–G119. The EAR-like (transcriptional repression) signature appears at L33 to L37. The segment covering A105–V118 has biased composition (low complexity). A PB1 domain is found at F151 to G239.

The protein belongs to the Aux/IAA family. As to quaternary structure, homodimers and heterodimers. In terms of tissue distribution, highly expressed in etiolated seedlings and flowers. Expressed in roots and green seedlings.

It localises to the nucleus. Its function is as follows. Aux/IAA proteins are short-lived transcriptional factors that function as repressors of early auxin response genes at low auxin concentrations. This Oryza sativa subsp. japonica (Rice) protein is Auxin-responsive protein IAA17 (IAA17).